Consider the following 288-residue polypeptide: Stage IV sporulation protein FB (288 aa).

The Mother cell cytoplasmic portion of the chain corresponds to Met1–Lys10. Residues Ile11–Met30 traverse the membrane as a helical segment. Lys31 is a topological domain (forespore intermembrane space). A helical membrane pass occupies residues Ala32–Trp56. A Zn(2+)-binding site is contributed by His43. Glu44 is a catalytic residue. His47 lines the Zn(2+) pocket. Residues Arg57–Glu83 are Mother cell cytoplasmic-facing. Residues Phe84–Ala105 traverse the membrane as a helical segment. At Glu106–Leu126 the chain is on the forespore intermembrane space side. The chain crosses the membrane as a helical span at residues Phe127–Phe146. Zn(2+) is bound at residue Asp137. Over Ser147–Lys161 the chain is Mother cell cytoplasmic. A helical transmembrane segment spans residues Thr162–Ile178. Residue Pro179 is a topological domain, forespore intermembrane space. The helical transmembrane segment at Leu180–Tyr199 threads the bilayer. The Mother cell cytoplasmic segment spans residues Arg200–Tyr288.

This sequence belongs to the peptidase M50B family. In terms of assembly, forms a complex with SpoIVFA and BofA localized in the mother-cell membrane surrounding the forespore. It depends on Zn(2+) as a cofactor.

The protein localises to the forespore outer membrane. Its function is as follows. Implicated in the coupling of mother cell to forespore gene expression. Required for spore formation. Processes the pro-sigma K factor. The polypeptide is Stage IV sporulation protein FB (spoIVFB) (Bacillus subtilis (strain 168)).